A 502-amino-acid polypeptide reads, in one-letter code: Aspartyl/glutamyl-tRNA(Asn/Gln) amidotransferase subunit B (502 aa).

This sequence belongs to the GatB/GatE family. GatB subfamily. As to quaternary structure, heterotrimer of A, B and C subunits.

The catalysed reaction is L-glutamyl-tRNA(Gln) + L-glutamine + ATP + H2O = L-glutaminyl-tRNA(Gln) + L-glutamate + ADP + phosphate + H(+). The enzyme catalyses L-aspartyl-tRNA(Asn) + L-glutamine + ATP + H2O = L-asparaginyl-tRNA(Asn) + L-glutamate + ADP + phosphate + 2 H(+). Functionally, allows the formation of correctly charged Asn-tRNA(Asn) or Gln-tRNA(Gln) through the transamidation of misacylated Asp-tRNA(Asn) or Glu-tRNA(Gln) in organisms which lack either or both of asparaginyl-tRNA or glutaminyl-tRNA synthetases. The reaction takes place in the presence of glutamine and ATP through an activated phospho-Asp-tRNA(Asn) or phospho-Glu-tRNA(Gln). This chain is Aspartyl/glutamyl-tRNA(Asn/Gln) amidotransferase subunit B, found in Ruegeria sp. (strain TM1040) (Silicibacter sp.).